Reading from the N-terminus, the 231-residue chain is Protein C activator (231 aa).

Residues 1–222 enclose the Peptidase S1 domain; sequence VIGGDECNIN…YTDWIQSIIS (222 aa). Disulfide bonds link C7–C138, C25–C41, C73–C229, C117–C183, C149–C162, and C173–C198. A glycan (N-linked (GlcNAc...) asparagine) is linked at N21. H40 (charge relay system) is an active-site residue. N78 carries an N-linked (GlcNAc...) asparagine glycan. D85 acts as the Charge relay system in catalysis. N129 carries N-linked (GlcNAc...) asparagine glycosylation. The Charge relay system role is filled by S177.

Belongs to the peptidase S1 family. Snake venom subfamily. Monomer. In terms of tissue distribution, expressed by the venom gland.

It is found in the secreted. In terms of biological role, snake venom serine protease that selectively cleaves the heavy chain of protein C (PROC). This activation is thrombomodulin-independent. The chain is Protein C activator from Agkistrodon contortrix contortrix (Southern copperhead).